The following is a 339-amino-acid chain: STEAP1 protein (339 aa).

2 consecutive transmembrane segments (helical) span residues 71–91 and 119–139; these read WHLPIKIAAIIASLTFLYTLL and PMVSITLLALVYLPGVIAAIV. The Ferric oxidoreductase domain maps to 118–265; it reads LPMVSITLLA…KLGIVSLLLG (148 aa). FAD contacts are provided by Gln-140 and Arg-161. 2 helical membrane passes run 164–184 and 218–238; these read FGLLSFFFAVLHAIYSLSYPM and IYVSLGIVGLAILALLAVTSI. His-175 lines the heme b pocket. Positions 237 and 254 each coordinate FAD. 2 helical membrane passes run 258–278 and 291–311; these read GIVSLLLGTIHALIFAWNKWI and FMIAVFLPIVVLIFKSILFLP. Residue His-268 coordinates heme b.

It belongs to the STEAP family. Homotrimer. It depends on FAD as a cofactor. Heme b serves as cofactor. Ubiquitously expressed. Highly expressed in prostate tumors.

The protein resides in the endosome membrane. Its subcellular location is the cell membrane. Does not function as a metalloreductase due to the absence of binding sites for the electron-donating substrate NADPH. Promotes Fe(3+) reduction when fused to the NADPH-binding domain of STEAP4. This chain is STEAP1 protein (STEAP1), found in Homo sapiens (Human).